Here is a 115-residue protein sequence, read N- to C-terminus: Protachykinin-1 (115 aa).

Positions 1-19 are cleaved as a signal peptide; it reads MKILVALAVLALVSTQLFA. Positions 20-56 are excised as a propeptide; sequence EDIRANDDLNYWSDWSDSDQIKEELPEPFEHLLQRIA. Methionine amide occurs at positions 68 and 92.

This sequence belongs to the tachykinin family. Post-translationally, the substance P form is cleaved at Pro-59 by the prolyl endopeptidase FAP (seprase) activity (in vitro). Substance P is also cleaved and degraded by Angiotensin-converting enzyme (ACE) and neprilysin (MME).

It is found in the secreted. In terms of biological role, tachykinins are active peptides which excite neurons, evoke behavioral responses, are potent vasodilators and secretagogues, and contract (directly or indirectly) many smooth muscles. The protein is Protachykinin-1 (TAC1) of Oryctolagus cuniculus (Rabbit).